A 365-amino-acid chain; its full sequence is MSAAQIFNTVHVNGSSPYDVHIGSGLNELIVQRAAESGAEQVAILHQPSMDDIASELDAALVAAGLKVLHLNVPDAENGKSLEVAGQCWDELGGAAFGRRDIVIGLGGGAATDLAGFVAAAWMRGVRVIQVPTTLLAMVDAAVGGKTGINTAAGKNLVGAFHEPDAVFIDTERLATLPDAEIIAGSAEIIKTGFIADPEILRLYETDPAACLKKEVEGSHLPELIWRSVTVKGSVVGQDLKESSLREILNYGHTFAHAVELRENFRWRHGNAVAVGMMFIANLSHKLGLIDAPLLERHRSILAAIGLPTSYEGGAFDELYDGMTRDKKNRDGNIRFVALTAVGEVTRIEGPSKQDLQSAYEAISH.

Residues 75–80, 109–113, 133–134, Lys146, and Lys155 contribute to the NAD(+) site; these read DAENGK, GAATD, and TT. Residues Glu188, His253, and His269 each coordinate Zn(2+).

It belongs to the sugar phosphate cyclases superfamily. Dehydroquinate synthase family. Requires Co(2+) as cofactor. The cofactor is Zn(2+). NAD(+) is required as a cofactor.

It localises to the cytoplasm. The enzyme catalyses 7-phospho-2-dehydro-3-deoxy-D-arabino-heptonate = 3-dehydroquinate + phosphate. It functions in the pathway metabolic intermediate biosynthesis; chorismate biosynthesis; chorismate from D-erythrose 4-phosphate and phosphoenolpyruvate: step 2/7. Functionally, catalyzes the conversion of 3-deoxy-D-arabino-heptulosonate 7-phosphate (DAHP) to dehydroquinate (DHQ). This is 3-dehydroquinate synthase from Corynebacterium glutamicum (strain R).